The following is a 145-amino-acid chain: Large ribosomal subunit protein bL17 (145 aa).

The protein belongs to the bacterial ribosomal protein bL17 family. Part of the 50S ribosomal subunit. Contacts protein L32.

The sequence is that of Large ribosomal subunit protein bL17 from Francisella tularensis subsp. tularensis (strain FSC 198).